The primary structure comprises 454 residues: Prenyltransferase nscD (454 aa).

This sequence belongs to the tryptophan dimethylallyltransferase family.

The protein operates within secondary metabolite biosynthesis. Prenyltransferase; part of the gene cluster that mediates the biosynthesis of neosartoricin, a prenylated anthracenone that exhibits T-cell antiproliferative activity, suggestive of a physiological role as an immunosuppressive agent. The non-reducing polyketide synthase nscA probably synthesizes and cyclizes the decaketide backbone. The hydrolase nscB then mediates the product release through hydrolysis followed by spontaneous decarboxylation. The prenyltransferase nscD catalyzes the addition of the dimethylallyl group to the aromatic C5. The FAD-dependent monooxygenase nscC is then responsible for the stereospecific hydroxylation at C2. There is no gene encoding O-acetyltransferase in the nsc gene cluster; thus, the last step of 2-O-acetylation leading to neosartoricin may be catalyzed by an unidentified O-acetyltransferase. This Neosartorya fischeri (strain ATCC 1020 / DSM 3700 / CBS 544.65 / FGSC A1164 / JCM 1740 / NRRL 181 / WB 181) (Aspergillus fischerianus) protein is Prenyltransferase nscD.